We begin with the raw amino-acid sequence, 280 residues long: Chemotaxis protein methyltransferase 2 (280 aa).

A CheR-type methyltransferase domain is found at 10–280; the sequence is FGNQEFHYTR…SVGQTVYSPA (271 aa). S-adenosyl-L-methionine-binding positions include Asn-85, Thr-87, Arg-91, Glu-125, Asp-150, 208–209, and 226–227; these read NL and RN.

Interacts with the C-terminal pentapeptide GWEEF of the methyl-accepting chemotaxis protein McpB.

It carries out the reaction L-glutamyl-[protein] + S-adenosyl-L-methionine = [protein]-L-glutamate 5-O-methyl ester + S-adenosyl-L-homocysteine. Its function is as follows. Methylation of the methyl-accepting chemotaxis proteins (MCP) to form gamma-glutamyl methyl ester residues in MCP. It specifically targets the McpB chemoreceptor. The sequence is that of Chemotaxis protein methyltransferase 2 from Pseudomonas aeruginosa (strain ATCC 15692 / DSM 22644 / CIP 104116 / JCM 14847 / LMG 12228 / 1C / PRS 101 / PAO1).